A 662-amino-acid chain; its full sequence is Glycogen debranching enzyme (662 aa).

D338 acts as the Nucleophile in catalysis. E373 acts as the Proton donor in catalysis.

Belongs to the glycosyl hydrolase 13 family.

The enzyme catalyses Hydrolysis of (1-&gt;6)-alpha-D-glucosidic linkages to branches with degrees of polymerization of three or four glucose residues in limit dextrin.. Its pathway is glycan degradation; glycogen degradation. Functionally, removes maltotriose and maltotetraose chains that are attached by 1,6-alpha-linkage to the limit dextrin main chain, generating a debranched limit dextrin. The protein is Glycogen debranching enzyme of Yersinia pseudotuberculosis serotype IB (strain PB1/+).